Reading from the N-terminus, the 257-residue chain is Snake venom serine protease KN10 (257 aa).

Residues 1 to 18 form the signal peptide; the sequence is MVLIRVLANLLILQLSYA. A propeptide spanning residues 19–24 is cleaved from the precursor; it reads QKSSEL. In terms of domain architecture, Peptidase S1 spans 25-248; that stretch reads VVGGDECNIN…HLDWIKSIIA (224 aa). 5 disulfides stabilise this stretch: Cys31/Cys162, Cys49/Cys65, Cys141/Cys209, Cys173/Cys188, and Cys199/Cys224. The active-site Charge relay system is His64. N-linked (GlcNAc...) asparagine glycosylation is present at Asn102. Catalysis depends on Asp109, which acts as the Charge relay system. N-linked (GlcNAc...) asparagine glycans are attached at residues Asn120 and Asn121. Ser203 functions as the Charge relay system in the catalytic mechanism.

It belongs to the peptidase S1 family. Snake venom subfamily. In terms of assembly, monomer. Expressed by the venom gland.

Its subcellular location is the secreted. In terms of biological role, snake venom serine protease that may act in the hemostasis system of the prey. The sequence is that of Snake venom serine protease KN10 from Trimeresurus stejnegeri (Chinese green tree viper).